Consider the following 224-residue polypeptide: Cytidylate kinase (224 aa).

11-19 is an ATP binding site; it reads GPAAAGKST.

It belongs to the cytidylate kinase family. Type 1 subfamily.

Its subcellular location is the cytoplasm. The enzyme catalyses CMP + ATP = CDP + ADP. The catalysed reaction is dCMP + ATP = dCDP + ADP. This is Cytidylate kinase from Geobacillus kaustophilus (strain HTA426).